The sequence spans 426 residues: Hemojuvelin (426 aa).

A signal peptide spans 1–35 (MGEPGQSPSPRSSHGSPPTLSTLTLLLLLCGHAHS). Position 46 is a phosphotyrosine (Tyr-46). N-linked (GlcNAc...) asparagine glycosylation is present at Asn-118. A disordered region spans residues 119-142 (CSRQGPTAPPPPRGPALPGAGSGL). Disulfide bonds link Cys-148/Cys-230 and Cys-167/Cys-317. Asn-213 and Asn-372 each carry an N-linked (GlcNAc...) asparagine glycan. Asp-400 is lipidated: GPI-anchor amidated aspartate. Positions 401–426 (AGVPLSSATLLAPLLSGLFVLWLCIQ) are cleaved as a propeptide — removed in mature form.

Belongs to the repulsive guidance molecule (RGM) family. As to quaternary structure, interacts with BMP2 and BMP4. Interacts with BMP6. Interacts with BMPR1B. Interacts with TMPRSS6. Post-translationally, autocatalytically cleaved at low pH; the two chains remain linked via two disulfide bonds. Also proteolytically processed by TMPRSS6, several fragments being released in the extracellular space; regulates HJV activity in BMP signaling and thefore iron homeostasis. In terms of tissue distribution, adult and fetal liver, heart, and skeletal muscle.

It is found in the cell membrane. In terms of biological role, acts as a bone morphogenetic protein (BMP) coreceptor. Through enhancement of BMP signaling regulates hepcidin (HAMP) expression and regulates iron homeostasis. The chain is Hemojuvelin from Homo sapiens (Human).